Consider the following 210-residue polypeptide: Imidazoleglycerol-phosphate dehydratase (210 aa).

Residues 1–23 form a disordered region; the sequence is MNDSLLSNGHAPPLRQATVDRQT.

The protein belongs to the imidazoleglycerol-phosphate dehydratase family.

The protein resides in the cytoplasm. It carries out the reaction D-erythro-1-(imidazol-4-yl)glycerol 3-phosphate = 3-(imidazol-4-yl)-2-oxopropyl phosphate + H2O. It functions in the pathway amino-acid biosynthesis; L-histidine biosynthesis; L-histidine from 5-phospho-alpha-D-ribose 1-diphosphate: step 6/9. In Thermosynechococcus vestitus (strain NIES-2133 / IAM M-273 / BP-1), this protein is Imidazoleglycerol-phosphate dehydratase.